The primary structure comprises 238 residues: 7-cyano-7-deazaguanine synthase (238 aa).

Position 12 to 22 (12 to 22 (FSGGQDSTTCL)) interacts with ATP. Cysteine 191, cysteine 200, cysteine 203, and cysteine 206 together coordinate Zn(2+).

The protein belongs to the QueC family. The cofactor is Zn(2+).

It carries out the reaction 7-carboxy-7-deazaguanine + NH4(+) + ATP = 7-cyano-7-deazaguanine + ADP + phosphate + H2O + H(+). Its pathway is purine metabolism; 7-cyano-7-deazaguanine biosynthesis. Catalyzes the ATP-dependent conversion of 7-carboxy-7-deazaguanine (CDG) to 7-cyano-7-deazaguanine (preQ(0)). The polypeptide is 7-cyano-7-deazaguanine synthase (Shewanella oneidensis (strain ATCC 700550 / JCM 31522 / CIP 106686 / LMG 19005 / NCIMB 14063 / MR-1)).